A 378-amino-acid chain; its full sequence is tRNA N(3)-cytidine methyltransferase METTL2B (378 aa).

A2 carries the post-translational modification N-acetylalanine. Residue S4 is modified to Phosphoserine. Residues W78 and Y82 each contribute to the S-adenosyl-L-methionine site. T154 bears the Phosphothreonine mark. S-adenosyl-L-methionine is bound by residues G188, D213, D239, L240, and I260.

This sequence belongs to the methyltransferase superfamily. METL family. As to quaternary structure, monomer. Interacts with DALRD3.

It is found in the cytoplasm. The enzyme catalyses cytidine(32) in tRNA(Thr) + S-adenosyl-L-methionine = N(3)-methylcytidine(32) in tRNA(Thr) + S-adenosyl-L-homocysteine + H(+). It carries out the reaction cytidine(32) in tRNA(Arg)(CCU) + S-adenosyl-L-methionine = N(3)-methylcytidine(32) in tRNA(Arg)(CCU) + S-adenosyl-L-homocysteine + H(+). In terms of biological role, S-adenosyl-L-methionine-dependent methyltransferase that mediates N(3)-methylcytidine modification of residue 32 of the tRNA anticodon loop of tRNA(Thr)(UGU) and tRNA(Arg)(CCU). This is tRNA N(3)-cytidine methyltransferase METTL2B from Homo sapiens (Human).